Reading from the N-terminus, the 170-residue chain is Crossover junction endodeoxyribonuclease RuvC (170 aa).

Catalysis depends on residues D8, E67, and D139. Residues D8, E67, and D139 each contribute to the Mg(2+) site.

Belongs to the RuvC family. In terms of assembly, homodimer which binds Holliday junction (HJ) DNA. The HJ becomes 2-fold symmetrical on binding to RuvC with unstacked arms; it has a different conformation from HJ DNA in complex with RuvA. In the full resolvosome a probable DNA-RuvA(4)-RuvB(12)-RuvC(2) complex forms which resolves the HJ. Mg(2+) is required as a cofactor.

It is found in the cytoplasm. It catalyses the reaction Endonucleolytic cleavage at a junction such as a reciprocal single-stranded crossover between two homologous DNA duplexes (Holliday junction).. The RuvA-RuvB-RuvC complex processes Holliday junction (HJ) DNA during genetic recombination and DNA repair. Endonuclease that resolves HJ intermediates. Cleaves cruciform DNA by making single-stranded nicks across the HJ at symmetrical positions within the homologous arms, yielding a 5'-phosphate and a 3'-hydroxyl group; requires a central core of homology in the junction. The consensus cleavage sequence is 5'-(A/T)TT(C/G)-3'. Cleavage occurs on the 3'-side of the TT dinucleotide at the point of strand exchange. HJ branch migration catalyzed by RuvA-RuvB allows RuvC to scan DNA until it finds its consensus sequence, where it cleaves and resolves the cruciform DNA. In Pectobacterium atrosepticum (strain SCRI 1043 / ATCC BAA-672) (Erwinia carotovora subsp. atroseptica), this protein is Crossover junction endodeoxyribonuclease RuvC.